Consider the following 370-residue polypeptide: Probable endopolygalacturonase A (370 aa).

Positions 1-19 (MPSAKPLFCLATLAGAALA) are cleaved as a signal peptide. The propeptide occupies 20–32 (APAPSRATDFNKR). Cysteine 35 and cysteine 50 are disulfide-bonded. PbH1 repeat units lie at residues 162 to 192 (SDNLVIEDVTIDNSDGDSEGGHNTDGFDISE), 193 to 214 (STYITITGATVKNQDDCVAINS), 215 to 235 (GENIYFSGGTCSGGHGLSIGS), 244 to 265 (VKNVTFIDSTVSDSENGVRIKT), 273 to 295 (VEDITYSNIQLSGISDYGIVIEQ), and 307 to 352 (SNGV…DITG). Residue aspartate 207 is the Proton donor of the active site. A disulfide bridge connects residues cysteine 209 and cysteine 225. Residue histidine 229 is part of the active site. An N-linked (GlcNAc...) asparagine glycan is attached at asparagine 246. Intrachain disulfides connect cysteine 335-cysteine 340 and cysteine 359-cysteine 368.

The protein belongs to the glycosyl hydrolase 28 family.

It localises to the secreted. The catalysed reaction is (1,4-alpha-D-galacturonosyl)n+m + H2O = (1,4-alpha-D-galacturonosyl)n + (1,4-alpha-D-galacturonosyl)m.. Functionally, involved in maceration and soft-rotting of plant tissue. Hydrolyzes the 1,4-alpha glycosidic bonds of de-esterified pectate in the smooth region of the plant cell wall. This is Probable endopolygalacturonase A (pgaA) from Aspergillus kawachii (strain NBRC 4308) (White koji mold).